Here is a 474-residue protein sequence, read N- to C-terminus: Aspartyl/glutamyl-tRNA(Asn/Gln) amidotransferase subunit B (474 aa).

This sequence belongs to the GatB/GatE family. GatB subfamily. Heterotrimer of A, B and C subunits.

The enzyme catalyses L-glutamyl-tRNA(Gln) + L-glutamine + ATP + H2O = L-glutaminyl-tRNA(Gln) + L-glutamate + ADP + phosphate + H(+). The catalysed reaction is L-aspartyl-tRNA(Asn) + L-glutamine + ATP + H2O = L-asparaginyl-tRNA(Asn) + L-glutamate + ADP + phosphate + 2 H(+). Functionally, allows the formation of correctly charged Asn-tRNA(Asn) or Gln-tRNA(Gln) through the transamidation of misacylated Asp-tRNA(Asn) or Glu-tRNA(Gln) in organisms which lack either or both of asparaginyl-tRNA or glutaminyl-tRNA synthetases. The reaction takes place in the presence of glutamine and ATP through an activated phospho-Asp-tRNA(Asn) or phospho-Glu-tRNA(Gln). This chain is Aspartyl/glutamyl-tRNA(Asn/Gln) amidotransferase subunit B, found in Persephonella marina (strain DSM 14350 / EX-H1).